Here is a 266-residue protein sequence, read N- to C-terminus: uncharacterized protein (266 aa).

The protein belongs to the chlamydial CPn_0087/CT_309/TC_0583 family.

This is an uncharacterized protein from Chlamydia trachomatis serovar D (strain ATCC VR-885 / DSM 19411 / UW-3/Cx).